Here is a 326-residue protein sequence, read N- to C-terminus: D-alanine--D-alanine ligase (326 aa).

Residues 114–313 (KRVWLQHGLR…YAELCVSIVS (200 aa)) enclose the ATP-grasp domain. 140-195 (PDRLGLPLILKPPHEGSTVGITKVAGYSDMKEGYAQAAKFDDEVLAEQFIAGRELT) contacts ATP. 3 residues coordinate Mg(2+): aspartate 267, glutamate 280, and asparagine 282.

The protein belongs to the D-alanine--D-alanine ligase family. Requires Mg(2+) as cofactor. Mn(2+) is required as a cofactor.

It localises to the cytoplasm. It catalyses the reaction 2 D-alanine + ATP = D-alanyl-D-alanine + ADP + phosphate + H(+). It participates in cell wall biogenesis; peptidoglycan biosynthesis. Functionally, cell wall formation. The polypeptide is D-alanine--D-alanine ligase (Bordetella petrii (strain ATCC BAA-461 / DSM 12804 / CCUG 43448)).